A 122-amino-acid chain; its full sequence is Large ribosomal subunit protein uL14 (122 aa).

The protein belongs to the universal ribosomal protein uL14 family. In terms of assembly, part of the 50S ribosomal subunit. Forms a cluster with proteins L3 and L19. In the 70S ribosome, L14 and L19 interact and together make contacts with the 16S rRNA in bridges B5 and B8.

Binds to 23S rRNA. Forms part of two intersubunit bridges in the 70S ribosome. This is Large ribosomal subunit protein uL14 from Xanthomonas axonopodis pv. citri (strain 306).